Here is a 177-residue protein sequence, read N- to C-terminus: MSRIGKKPVTVPSGVTATVDGQTVKMKGPKGQLQFIVHDDVDVKFENGQVRVAPRSETKRARSLYGTARAQIANLVEGVTKGFEKKLEITGVGYRAAMQGKNLQLALGYSHDVVYQIPEGITIAVPKPTEITVTGIDPQRVGQVAAEIRAYRPPEPYKGKGVKYAGEFIFRKEGKKK.

The protein belongs to the universal ribosomal protein uL6 family. As to quaternary structure, part of the 50S ribosomal subunit.

In terms of biological role, this protein binds to the 23S rRNA, and is important in its secondary structure. It is located near the subunit interface in the base of the L7/L12 stalk, and near the tRNA binding site of the peptidyltransferase center. The protein is Large ribosomal subunit protein uL6 of Bradyrhizobium sp. (strain BTAi1 / ATCC BAA-1182).